The primary structure comprises 704 residues: Nucleolar and coiled-body phosphoprotein 1 (704 aa).

The LisH domain maps to 10-42 (VPSDLYPLVLGFLRDNQLSEVASKFAKATGATQ). Residue K33 is modified to N6-acetyllysine. Residues 65 to 638 (KVKLQSNGPV…PFRRVREEEI (574 aa)) form a disordered region. Residues K67 and K76 each participate in a glycyl lysine isopeptide (Lys-Gly) (interchain with G-Cter in SUMO2) cross-link. Acidic serine cluster repeat units follow at residues 84-95 (SSDSSEDSSEEE) and 127-138 (ESSSSEESSEEE). An 11 X 12 AA approximate repeats of an acidic serine cluster region spans residues 84-570 (SSDSSEDSSE…GKAGKESEEE (487 aa)). Phosphoserine is present on residues S87, S88, S91, and S92. The span at 87–96 (SSEDSSEEED) shows a compositional bias: acidic residues. A diphosphoserine mark is found at S88 and S91. 2 stretches are compositionally biased toward low complexity: residues 120–132 (KAAAKASESSSSE) and 149–160 (QQKAVKPQAKAV). Residues 170–181 (SESESDSSSEDE) form an Acidic serine cluster 3 repeat. Residues 170–182 (SESESDSSSEDEA) show a composition bias toward acidic residues. Low complexity-rich tracts occupy residues 183-207 (PQTQKPKAAATAAKAPTKAQTKAPA), 215-236 (AQPKAANGKAGSSSSSSSSSSS), and 246-279 (AAPLKKTAPKKQVVAKAPVKVTAAPTQKSSSSED). Residues K189 and K200 each participate in a glycyl lysine isopeptide (Lys-Gly) (interchain with G-Cter in SUMO2) cross-link. Acidic serine cluster repeat units lie at residues 231–242 (SSSSSSDDSEEE), 274–285 (SSSSEDSSSEEE), and 335–346 (SSEESDSSSEEE). Glycyl lysine isopeptide (Lys-Gly) (interchain with G-Cter in SUMO2) cross-links involve residues K352 and K357. 3 positions are modified to phosphoserine: S372, S373, and S376. An Acidic serine cluster 7 repeat occupies 373–384 (SDSSDSDSSEDE). Glycyl lysine isopeptide (Lys-Gly) (interchain with G-Cter in SUMO2) cross-links involve residues K399, K405, K410, and K416. The segment covering 408 to 419 (AAKAVATPKQPA) has biased composition (low complexity). Residue K424 is modified to N6-acetyllysine; alternate. Residue K424 forms a Glycyl lysine isopeptide (Lys-Gly) (interchain with G-Cter in SUMO1); alternate linkage. A Glycyl lysine isopeptide (Lys-Gly) (interchain with G-Cter in SUMO2); alternate cross-link involves residue K424. A compositionally biased stretch (acidic residues) spans 434–444 (SSEEESSSSEE). The Acidic serine cluster 8 repeat unit spans residues 434–445 (SSEEESSSSEEE). Glycyl lysine isopeptide (Lys-Gly) (interchain with G-Cter in SUMO2) cross-links involve residues K449 and K461. Phosphoserine is present on S465. 2 stretches are compositionally biased toward low complexity: residues 474–485 (AGGDSSSDSESS) and 504–529 (AGAAVPKPTPVKKAAAESSSSSSSSE). Residues 479-490 (SSDSESSSSEEE) form an Acidic serine cluster 9 repeat. A Glycyl lysine isopeptide (Lys-Gly) (interchain with G-Cter in SUMO2) cross-link involves residue K510. Acidic serine cluster repeat units lie at residues 524-535 (SSSSSEDSSEEE) and 559-570 (QNGKAGKESEEE). S567 is subject to Phosphoserine. Residue K584 forms a Glycyl lysine isopeptide (Lys-Gly) (interchain with G-Cter in SUMO2) linkage. Position 587 is a phosphoserine (S587). The residue at position 596 (T596) is a Phosphothreonine. K609 participates in a covalent cross-link: Glycyl lysine isopeptide (Lys-Gly) (interchain with G-Cter in SUMO2). 2 positions are modified to phosphothreonine: T612 and T615. K618 participates in a covalent cross-link: Glycyl lysine isopeptide (Lys-Gly) (interchain with G-Cter in SUMO2). A phosphoserine mark is found at S627 and S648. A Glycyl lysine isopeptide (Lys-Gly) (interchain with G-Cter in SUMO2) cross-link involves residue K652. K668 is modified (N6-acetyllysine; alternate). K668 is covalently cross-linked (Glycyl lysine isopeptide (Lys-Gly) (interchain with G-Cter in SUMO2); alternate). An Omega-N-methylarginine modification is found at R688. Residue S691 is modified to Phosphoserine. K700 participates in a covalent cross-link: Glycyl lysine isopeptide (Lys-Gly) (interchain with G-Cter in SUMO2). A Phosphoserine modification is found at S703.

The protein belongs to the NOLC1 family. As to quaternary structure, interacts with RNA polymerase I 194 kDa subunit (RPA194) and with casein kinase-II. Interacts with DKC1/NAP57, NOP58 and fibrillarin. In terms of processing, undergoes rapid and massive phosphorylation/dephosphorylation cycles on CK2 and PKC sites. NOLC1 is one of the mostly phosphorylated proteins in the cell. Post-translationally, ubiquitinated. Monoubiquitination by the BCR(KBTBD8) complex promotes the formation of a NOLC1-TCOF1 complex that acts as a platform to connect RNA polymerase I with enzymes responsible for ribosomal processing and modification, leading to remodel the translational program of differentiating cells in favor of neural crest specification. Pyrophosphorylated by 5-diphosphoinositol pentakisphosphate (5-IP7). Serine pyrophosphorylation is achieved by Mg(2+)-dependent, but enzyme independent transfer of a beta-phosphate from a inositol pyrophosphate to a pre-phosphorylated serine residue.

It is found in the cytoplasm. Its subcellular location is the nucleus. The protein resides in the nucleolus. Functionally, nucleolar protein that acts as a regulator of RNA polymerase I by connecting RNA polymerase I with enzymes responsible for ribosomal processing and modification. Required for neural crest specification: following monoubiquitination by the BCR(KBTBD8) complex, associates with TCOF1 and acts as a platform to connect RNA polymerase I with enzymes responsible for ribosomal processing and modification, leading to remodel the translational program of differentiating cells in favor of neural crest specification. Involved in nucleologenesis, possibly by playing a role in the maintenance of the fundamental structure of the fibrillar center and dense fibrillar component in the nucleolus. It has intrinsic GTPase and ATPase activities. This Rattus norvegicus (Rat) protein is Nucleolar and coiled-body phosphoprotein 1.